We begin with the raw amino-acid sequence, 422 residues long: UPF0229 protein Spro_2732 (422 aa).

The span at Pro77–Arg90 shows a compositional bias: basic and acidic residues. Residues Pro77–Glu109 form a disordered region. Positions Gln92–Gln101 are enriched in gly residues.

Belongs to the UPF0229 family.

This Serratia proteamaculans (strain 568) protein is UPF0229 protein Spro_2732.